The primary structure comprises 196 residues: Nucleoid occlusion factor SlmA (196 aa).

The HTH tetR-type domain occupies 7–68 (TNRREEILQA…GLIEFIEDSI (62 aa)). Positions 31 to 50 (TTAKLAAQVGVSEAALYRHF) form a DNA-binding region, H-T-H motif. The stretch at 115–142 (EQDRLQSRINQLFERIETQLRQVLRERK) forms a coiled coil.

The protein belongs to the nucleoid occlusion factor SlmA family. Homodimer. Interacts with FtsZ.

It is found in the cytoplasm. It localises to the nucleoid. Required for nucleoid occlusion (NO) phenomenon, which prevents Z-ring formation and cell division over the nucleoid. Acts as a DNA-associated cell division inhibitor that binds simultaneously chromosomal DNA and FtsZ, and disrupts the assembly of FtsZ polymers. SlmA-DNA-binding sequences (SBS) are dispersed on non-Ter regions of the chromosome, preventing FtsZ polymerization at these regions. The chain is Nucleoid occlusion factor SlmA from Photobacterium profundum (strain SS9).